The sequence spans 468 residues: Ribulose bisphosphate carboxylase large chain (468 aa).

An N6,N6,N6-trimethyllysine modification is found at lysine 5. Asparagine 114 and threonine 164 together coordinate substrate. Lysine 166 serves as the catalytic Proton acceptor. Lysine 168 is a binding site for substrate. Positions 192, 194, and 195 each coordinate Mg(2+). At lysine 192 the chain carries N6-carboxylysine. Catalysis depends on histidine 285, which acts as the Proton acceptor. 3 residues coordinate substrate: arginine 286, histidine 318, and serine 370.

This sequence belongs to the RuBisCO large chain family. Type I subfamily. In terms of assembly, heterohexadecamer of 8 large chains and 8 small chains; disulfide-linked. The disulfide link is formed within the large subunit homodimers. Requires Mg(2+) as cofactor. In terms of processing, the disulfide bond which can form in the large chain dimeric partners within the hexadecamer appears to be associated with oxidative stress and protein turnover.

It is found in the plastid. The protein resides in the chloroplast. The enzyme catalyses 2 (2R)-3-phosphoglycerate + 2 H(+) = D-ribulose 1,5-bisphosphate + CO2 + H2O. The catalysed reaction is D-ribulose 1,5-bisphosphate + O2 = 2-phosphoglycolate + (2R)-3-phosphoglycerate + 2 H(+). Its function is as follows. RuBisCO catalyzes two reactions: the carboxylation of D-ribulose 1,5-bisphosphate, the primary event in carbon dioxide fixation, as well as the oxidative fragmentation of the pentose substrate in the photorespiration process. Both reactions occur simultaneously and in competition at the same active site. This Catesbaea spinosa protein is Ribulose bisphosphate carboxylase large chain.